The sequence spans 499 residues: Probable cytosol aminopeptidase (499 aa).

Mn(2+) contacts are provided by lysine 263 and aspartate 268. Residue lysine 275 is part of the active site. 3 residues coordinate Mn(2+): aspartate 286, aspartate 345, and glutamate 347. Arginine 349 is an active-site residue.

It belongs to the peptidase M17 family. Requires Mn(2+) as cofactor.

It localises to the cytoplasm. It carries out the reaction Release of an N-terminal amino acid, Xaa-|-Yaa-, in which Xaa is preferably Leu, but may be other amino acids including Pro although not Arg or Lys, and Yaa may be Pro. Amino acid amides and methyl esters are also readily hydrolyzed, but rates on arylamides are exceedingly low.. The catalysed reaction is Release of an N-terminal amino acid, preferentially leucine, but not glutamic or aspartic acids.. Presumably involved in the processing and regular turnover of intracellular proteins. Catalyzes the removal of unsubstituted N-terminal amino acids from various peptides. This Chlamydia caviae (strain ATCC VR-813 / DSM 19441 / 03DC25 / GPIC) (Chlamydophila caviae) protein is Probable cytosol aminopeptidase.